The following is a 426-amino-acid chain: 3-phosphoshikimate 1-carboxyvinyltransferase (426 aa).

3-phosphoshikimate contacts are provided by K22, S23, and R27. Residue K22 participates in phosphoenolpyruvate binding. Phosphoenolpyruvate is bound by residues G96 and R124. The 3-phosphoshikimate site is built by S170, S171, Q172, S198, D314, N337, and K341. A phosphoenolpyruvate-binding site is contributed by Q172. D314 functions as the Proton acceptor in the catalytic mechanism. R345, R387, and K412 together coordinate phosphoenolpyruvate.

Belongs to the EPSP synthase family. As to quaternary structure, monomer.

The protein localises to the cytoplasm. It carries out the reaction 3-phosphoshikimate + phosphoenolpyruvate = 5-O-(1-carboxyvinyl)-3-phosphoshikimate + phosphate. The protein operates within metabolic intermediate biosynthesis; chorismate biosynthesis; chorismate from D-erythrose 4-phosphate and phosphoenolpyruvate: step 6/7. Functionally, catalyzes the transfer of the enolpyruvyl moiety of phosphoenolpyruvate (PEP) to the 5-hydroxyl of shikimate-3-phosphate (S3P) to produce enolpyruvyl shikimate-3-phosphate and inorganic phosphate. The sequence is that of 3-phosphoshikimate 1-carboxyvinyltransferase from Shewanella sp. (strain ANA-3).